Here is a 449-residue protein sequence, read N- to C-terminus: UDP-glycosyltransferase 74F2 (449 aa).

UDP-alpha-D-glucose is bound by residues Ser273, 325–327, 342–350, and 364–367; these read SPQ, HCGWNSTME, and WTDQ.

It belongs to the UDP-glycosyltransferase family. As to expression, expressed in seedlings.

Functionally, glycosyltransferase that glucosylates benzoic acid and derivatives. Substrate preference is benzoic acid &gt; salicylic acid (SA) &gt; 3-hydroxybenzoic acid &gt; 4-hydroxybenzoic acid. Catalyzes the formation of both SA 2-O-beta-D-glucoside (SAG) and SA glucose ester (SGE). Has high affinity for the tryptophan precursor anthranilate. Catalyzes the formation of anthranilate glucose ester. Is the major source of this activity in the plant. This Arabidopsis thaliana (Mouse-ear cress) protein is UDP-glycosyltransferase 74F2 (UGT74F2).